The primary structure comprises 442 residues: Glycolipid 2-alpha-mannosyltransferase (442 aa).

Residues Met-1 to Arg-11 are Cytoplasmic-facing. Residues Phe-12–Ser-30 traverse the membrane as a helical; Signal-anchor for type II membrane protein segment. The interval Arg-31–Ala-118 is stem region. Residues Arg-31–Glu-442 are Lumenal-facing. The segment at Glu-68–Glu-95 is disordered. A compositionally biased stretch (basic and acidic residues) spans Glu-85–Glu-95. The interval Gly-119–Glu-442 is catalytic. N-linked (GlcNAc...) asparagine glycosylation occurs at Asn-197. The active-site Nucleophile is the Glu-329.

It belongs to the glycosyltransferase 15 family. It depends on Mn(2+) as a cofactor.

Its subcellular location is the golgi apparatus membrane. The protein operates within protein modification; protein glycosylation. Mannosyltransferase that transfers an alpha-D-mannosyl residue from GDP-mannose into lipid-linked oligosaccharide, forming an alpha-(1-&gt;2)-D-mannosyl-D-mannose linkage. Required for the attachment of the third mannose residue of O-linked saccharides. This Saccharomyces cerevisiae (strain ATCC 204508 / S288c) (Baker's yeast) protein is Glycolipid 2-alpha-mannosyltransferase (KRE2).